A 149-amino-acid chain; its full sequence is 3-hydroxyacyl-[acyl-carrier-protein] dehydratase FabZ (149 aa).

The active site involves H50.

Belongs to the thioester dehydratase family. FabZ subfamily.

It is found in the cytoplasm. It carries out the reaction a (3R)-hydroxyacyl-[ACP] = a (2E)-enoyl-[ACP] + H2O. Functionally, involved in unsaturated fatty acids biosynthesis. Catalyzes the dehydration of short chain beta-hydroxyacyl-ACPs and long chain saturated and unsaturated beta-hydroxyacyl-ACPs. In Pediococcus pentosaceus (strain ATCC 25745 / CCUG 21536 / LMG 10740 / 183-1w), this protein is 3-hydroxyacyl-[acyl-carrier-protein] dehydratase FabZ.